A 660-amino-acid chain; its full sequence is Bifunctional polymyxin resistance protein ArnA (660 aa).

A formyltransferase ArnAFT region spans residues 1 to 304 (MKAVIFAYHD…TLGLVAGARL (304 aa)). Catalysis depends on H104, which acts as the Proton donor; for formyltransferase activity. Residues R114 and 136-140 (VKRAD) each bind (6R)-10-formyltetrahydrofolate. The segment at 314–660 (RRIRVLILGV…RSVDVAERAS (347 aa)) is dehydrogenase ArnADH. Residues D347 and 368-369 (DI) each bind NAD(+). Residues A393, Y398, and 432 to 433 (TS) contribute to the UDP-alpha-D-glucuronate site. The active-site Proton acceptor; for decarboxylase activity is the E434. Residues R460, N492, 526-535 (KLIDGGQQKR), and Y613 contribute to the UDP-alpha-D-glucuronate site. The Proton donor; for decarboxylase activity role is filled by R619.

It in the N-terminal section; belongs to the Fmt family. UDP-L-Ara4N formyltransferase subfamily. The protein in the C-terminal section; belongs to the NAD(P)-dependent epimerase/dehydratase family. UDP-glucuronic acid decarboxylase subfamily. In terms of assembly, homohexamer, formed by a dimer of trimers.

The catalysed reaction is UDP-alpha-D-glucuronate + NAD(+) = UDP-beta-L-threo-pentopyranos-4-ulose + CO2 + NADH. It carries out the reaction UDP-4-amino-4-deoxy-beta-L-arabinose + (6R)-10-formyltetrahydrofolate = UDP-4-deoxy-4-formamido-beta-L-arabinose + (6S)-5,6,7,8-tetrahydrofolate + H(+). Its pathway is nucleotide-sugar biosynthesis; UDP-4-deoxy-4-formamido-beta-L-arabinose biosynthesis; UDP-4-deoxy-4-formamido-beta-L-arabinose from UDP-alpha-D-glucuronate: step 1/3. It participates in nucleotide-sugar biosynthesis; UDP-4-deoxy-4-formamido-beta-L-arabinose biosynthesis; UDP-4-deoxy-4-formamido-beta-L-arabinose from UDP-alpha-D-glucuronate: step 3/3. The protein operates within bacterial outer membrane biogenesis; lipopolysaccharide biosynthesis. Functionally, bifunctional enzyme that catalyzes the oxidative decarboxylation of UDP-glucuronic acid (UDP-GlcUA) to UDP-4-keto-arabinose (UDP-Ara4O) and the addition of a formyl group to UDP-4-amino-4-deoxy-L-arabinose (UDP-L-Ara4N) to form UDP-L-4-formamido-arabinose (UDP-L-Ara4FN). The modified arabinose is attached to lipid A and is required for resistance to polymyxin and cationic antimicrobial peptides. This Salmonella choleraesuis (strain SC-B67) protein is Bifunctional polymyxin resistance protein ArnA.